Here is a 609-residue protein sequence, read N- to C-terminus: Aspartate--tRNA(Asp/Asn) ligase (609 aa).

Glu177 is an L-aspartate binding site. Positions 201-204 (QLFK) are aspartate. Arg223 is an L-aspartate binding site. ATP-binding positions include 223 to 225 (RDE) and Gln232. His461 is a binding site for L-aspartate. Glu499 is an ATP binding site. Arg506 contributes to the L-aspartate binding site. 551 to 554 (GVDR) serves as a coordination point for ATP.

This sequence belongs to the class-II aminoacyl-tRNA synthetase family. Type 1 subfamily. In terms of assembly, homodimer.

Its subcellular location is the cytoplasm. The enzyme catalyses tRNA(Asx) + L-aspartate + ATP = L-aspartyl-tRNA(Asx) + AMP + diphosphate. Functionally, aspartyl-tRNA synthetase with relaxed tRNA specificity since it is able to aspartylate not only its cognate tRNA(Asp) but also tRNA(Asn). Reaction proceeds in two steps: L-aspartate is first activated by ATP to form Asp-AMP and then transferred to the acceptor end of tRNA(Asp/Asn). The chain is Aspartate--tRNA(Asp/Asn) ligase from Synechococcus sp. (strain CC9605).